A 448-amino-acid chain; its full sequence is Phosphoglucosamine mutase (448 aa).

Ser-101 (phosphoserine intermediate) is an active-site residue. 4 residues coordinate Mg(2+): Ser-101, Asp-241, Asp-243, and Asp-245. A Phosphoserine modification is found at Ser-101.

This sequence belongs to the phosphohexose mutase family. Mg(2+) is required as a cofactor. Post-translationally, activated by phosphorylation.

The enzyme catalyses alpha-D-glucosamine 1-phosphate = D-glucosamine 6-phosphate. Catalyzes the conversion of glucosamine-6-phosphate to glucosamine-1-phosphate. This Macrococcus caseolyticus (strain JCSC5402) (Macrococcoides caseolyticum) protein is Phosphoglucosamine mutase.